A 221-amino-acid chain; its full sequence is MTKNINIAIDGPSGVGKSTIAKKLADHLNYVFINTGLFYRAIAFYKDKFNLTQDLLVKELKNIKINYVNEDQIFLNNQDIAPYLRDEKISEQASEISTILDIRNFINQIIIDTMKVKKGYVIEGRDTTFKLAPDAEVRIFLDASSPIRARRRVLQNSQLNTESNYEKILDNINKRDYSDRNREVDPLHVAQGVIAIVNDHMNIEETFEKILGLVNEAIDKK.

Gly11–Thr19 contributes to the ATP binding site.

This sequence belongs to the cytidylate kinase family. Type 1 subfamily.

The protein resides in the cytoplasm. The catalysed reaction is CMP + ATP = CDP + ADP. It carries out the reaction dCMP + ATP = dCDP + ADP. The sequence is that of Cytidylate kinase from Mycoplasmopsis pulmonis (strain UAB CTIP) (Mycoplasma pulmonis).